The primary structure comprises 319 residues: Mercury resistance probable Hg transport protein (319 aa).

4 residues coordinate Hg(2+): cysteine 298, cysteine 299, cysteine 318, and cysteine 319.

This is Mercury resistance probable Hg transport protein from Streptomyces lividans.